We begin with the raw amino-acid sequence, 399 residues long: Lipoyl synthase, mitochondrial (399 aa).

The transit peptide at 1–14 (MALISRSCGAASRY) directs the protein to the mitochondrion. A compositionally biased stretch (low complexity) spans 39–52 (AASTSSSSSPSPST). Positions 39–60 (AASTSSSSSPSPSTHNDRKKDL) are disordered. Positions 128, 133, 139, 159, 163, 166, and 374 each coordinate [4Fe-4S] cluster. A Radical SAM core domain is found at 144–363 (EYATATATIM…EKVGQEMGFI (220 aa)).

Belongs to the radical SAM superfamily. Lipoyl synthase family. Requires [4Fe-4S] cluster as cofactor.

It localises to the mitochondrion. It carries out the reaction [[Fe-S] cluster scaffold protein carrying a second [4Fe-4S](2+) cluster] + N(6)-octanoyl-L-lysyl-[protein] + 2 oxidized [2Fe-2S]-[ferredoxin] + 2 S-adenosyl-L-methionine + 4 H(+) = [[Fe-S] cluster scaffold protein] + N(6)-[(R)-dihydrolipoyl]-L-lysyl-[protein] + 4 Fe(3+) + 2 hydrogen sulfide + 2 5'-deoxyadenosine + 2 L-methionine + 2 reduced [2Fe-2S]-[ferredoxin]. It functions in the pathway protein modification; protein lipoylation via endogenous pathway; protein N(6)-(lipoyl)lysine from octanoyl-[acyl-carrier-protein]: step 2/2. Its function is as follows. Catalyzes the radical-mediated insertion of two sulfur atoms into the C-6 and C-8 positions of the octanoyl moiety bound to the lipoyl domains of lipoate-dependent enzymes, thereby converting the octanoylated domains into lipoylated derivatives. This is Lipoyl synthase, mitochondrial (lias) from Danio rerio (Zebrafish).